A 385-amino-acid polypeptide reads, in one-letter code: Calcium/calmodulin-dependent protein kinase type 1D (385 aa).

Residues 23–279 (FEFKETLGTG…CEQAARHPWI (257 aa)) form the Protein kinase domain. ATP is bound by residues 29–37 (LGTGAFSEV) and Lys-52. Residue Lys-113 forms a Glycyl lysine isopeptide (Lys-Gly) (interchain with G-Cter in SUMO2) linkage. Phosphoserine is present on Ser-122. Asp-144 acts as the Proton acceptor in catalysis. Position 180 is a phosphothreonine; by CaMKK1 and CaMKK2 (Thr-180). The interval 279-319 (IAGDTALNKNIHESVSAQIRKNFAKSKWRQAFNATAVVRHM) is autoinhibitory domain. The calmodulin-binding stretch occupies residues 299 to 320 (KNFAKSKWRQAFNATAVVRHMR). The short motif at 318 to 324 (HMRKLHL) is the Nuclear export signal element. Residues 360–385 (SSGVSGVGAERRPRPTTVTAVHSGSK) form a disordered region. A compositionally biased stretch (polar residues) spans 375 to 385 (TTVTAVHSGSK).

Belongs to the protein kinase superfamily. CAMK Ser/Thr protein kinase family. CaMK subfamily. As to expression, widely expressed. Highly and mostly expressed in polymorphonuclear leukocytes (neutrophilic and eosinophilic granulocytes) while little or no expression is observed in monocytes and lymphocytes.

It is found in the cytoplasm. It localises to the nucleus. The catalysed reaction is L-seryl-[protein] + ATP = O-phospho-L-seryl-[protein] + ADP + H(+). The enzyme catalyses L-threonyl-[protein] + ATP = O-phospho-L-threonyl-[protein] + ADP + H(+). Activated by Ca(2+)/calmodulin. Binding of calmodulin results in conformational change that relieves intrasteric autoinhibition and allows phosphorylation of Thr-180 within the activation loop by CaMKK1 or CaMKK2. Phosphorylation of Thr-180 results in several fold increase in total activity. Unlike CaMK4, may be unable to exhibit autonomous activity after Ca(2+)/calmodulin activation. Its function is as follows. Calcium/calmodulin-dependent protein kinase that operates in the calcium-triggered CaMKK-CaMK1 signaling cascade and, upon calcium influx, activates CREB-dependent gene transcription, regulates calcium-mediated granulocyte function and respiratory burst and promotes basal dendritic growth of hippocampal neurons. In neutrophil cells, required for cytokine-induced proliferative responses and activation of the respiratory burst. Activates the transcription factor CREB1 in hippocampal neuron nuclei. May play a role in apoptosis of erythroleukemia cells. In vitro, phosphorylates transcription factor CREM isoform Beta. The sequence is that of Calcium/calmodulin-dependent protein kinase type 1D (CAMK1D) from Homo sapiens (Human).